The sequence spans 1781 residues: Chitin synthase 7 (1781 aa).

Residues N133, N534, N629, N644, N655, and N660 are each glycosylated (N-linked (GlcNAc...) asparagine). A run of 2 helical transmembrane segments spans residues 741-761 and 777-797; these read AWVAFVWALTFWIPSPLLKFV and LVLFFIILLLNGLIIFWIIGF. N-linked (GlcNAc...) asparagine glycans are attached at residues N889 and N1011. A helical membrane pass occupies residues 1048 to 1068; that stretch reads LLLAFAIIICIVTAVKFLAAL. A glycan (N-linked (GlcNAc...) asparagine) is linked at N1413. 3 helical membrane passes run 1444–1464, 1471–1491, and 1499–1519; these read LTGTIILPSTTVYIGYLIYVL, IPYISLAMIGAVYGHQALIFI, and IGWMIIYILAFPIYSFILPLY. N-linked (GlcNAc...) asparagine glycosylation is present at N1526. Residues 1677 to 1712 form a disordered region; sequence QANLSPAAGGGHSRSGTALGFSSGSRSPMPDAMRSQ. The segment covering 1690–1702 has biased composition (polar residues); the sequence is RSGTALGFSSGSR. In terms of domain architecture, DEK-C spans 1723-1779; that stretch reads GPTDMAIVESIRSVLCEVDLDTVTKKQVRALVEQRLQTELVGERRTFMDRQIDHELE.

It belongs to the chitin synthase family. Class V subfamily.

Its subcellular location is the cell membrane. It catalyses the reaction [(1-&gt;4)-N-acetyl-beta-D-glucosaminyl](n) + UDP-N-acetyl-alpha-D-glucosamine = [(1-&gt;4)-N-acetyl-beta-D-glucosaminyl](n+1) + UDP + H(+). Functionally, polymerizes chitin, a structural polymer of the cell wall and septum, by transferring the sugar moiety of UDP-GlcNAc to the non-reducing end of the growing chitin polymer. Shows additive effects in septum formation with CHS1, CHS2, CHS3A, CHS4, CHS5 and CHS6. Indispensable for perithecia formation and regulates conidiation. Plays an important role in the response to cell wall stress. Also required for hyphal growth and pathogenicity. The polypeptide is Chitin synthase 7 (Gibberella zeae (strain ATCC MYA-4620 / CBS 123657 / FGSC 9075 / NRRL 31084 / PH-1) (Wheat head blight fungus)).